Here is a 214-residue protein sequence, read N- to C-terminus: Adenylate kinase (214 aa).

ATP is bound at residue 10–15 (GAGKGT). The interval 30 to 59 (STGDMLRAAVKAGTELGKQAKEIMDAGKLV) is NMP. AMP-binding positions include Thr-31, Arg-36, 57-59 (KLV), 85-88 (GFPR), and Gln-92. The tract at residues 122–159 (GRRVHAASGRVYHVKFNPPKVEDKDDVTGEDLSVRKDD) is LID. Residues Arg-123 and 132–133 (VY) contribute to the ATP site. Arg-156 and Arg-167 together coordinate AMP. Arg-200 serves as a coordination point for ATP.

It belongs to the adenylate kinase family. Monomer.

The protein localises to the cytoplasm. The enzyme catalyses AMP + ATP = 2 ADP. It participates in purine metabolism; AMP biosynthesis via salvage pathway; AMP from ADP: step 1/1. Catalyzes the reversible transfer of the terminal phosphate group between ATP and AMP. Plays an important role in cellular energy homeostasis and in adenine nucleotide metabolism. This is Adenylate kinase from Pectobacterium atrosepticum (strain SCRI 1043 / ATCC BAA-672) (Erwinia carotovora subsp. atroseptica).